The following is a 240-amino-acid chain: uncharacterized protein (240 aa).

The 222-residue stretch at 2-223 folds into the ABC transporter domain; it reads VRIQDLSLAF…GNAPRELHQA (222 aa). ATP is bound at residue 34–41; sequence GSSGVGKS.

Belongs to the ABC transporter superfamily.

This is an uncharacterized protein from Haemophilus influenzae (strain ATCC 51907 / DSM 11121 / KW20 / Rd).